Reading from the N-terminus, the 344-residue chain is MTDSKYVIIGAGISGLYTAWSLIDKGTGPSDIKVVAEFLPGDQSTLYTSPWAGGNFSLITSTDERSMKFDKFTYTNLHRIQELLGGPECGLDMLPSTEMFEQELDHAKLDSISQYLKEYRPMTKEEMPEGVVSGVKFLTWNFNCPLFLANFQKHLAAIGVTFERSKIDHISSVFSPSVDAVFNCTGIGAASLGGVKDENVFPTRGQVVVVRAPHIRENRFRWRPDSDTYVIPRPFSDGSIVMGGFFQEGNWSGNTYGYETEDILKRGLELYPEIGKRNELKIIREAAGLRPSRKGGVRIEVEHFDQVNGKDRYIVHNYGASGYGYQSGLGMANEATDMYFEAAK.

Ala-11, Ser-14, Ser-49, Gly-53, Asn-55, and Ile-167 together coordinate FAD. 2 residues coordinate (R)-lactate: Tyr-229 and Arg-290. Anthranilate-binding residues include Tyr-229 and Arg-290. Arg-290, Ser-321, Gly-324, Tyr-325, and Gln-326 together coordinate FAD.

It belongs to the DAMOX/DASOX family. Requires FAD as cofactor.

It is found in the peroxisome. The catalysed reaction is a D-alpha-amino acid + O2 + H2O = a 2-oxocarboxylate + H2O2 + NH4(+). The enzyme catalyses D-alanine + O2 + H2O = pyruvate + H2O2 + NH4(+). Catalyzes the oxidative deamination of D-amino acids with broad substrate specificity. Enables the organism to utilize D-amino acids as a source of nutrients. Enables the organism to utilize D-alanine as a source of nitrogen. The chain is D-amino-acid oxidase from Komagataella phaffii (strain GS115 / ATCC 20864) (Yeast).